The following is a 427-amino-acid chain: Glucan 1,3-beta-glucosidase 2 (427 aa).

An N-terminal signal peptide occupies residues 1–17 (MLISTFIISSLLSIALA). Glu217 (proton donor) is an active-site residue. 2 disulfide bridges follow: Cys299-Cys426 and Cys324-Cys355. Glu316 acts as the Nucleophile in catalysis.

This sequence belongs to the glycosyl hydrolase 5 (cellulase A) family.

The protein localises to the secreted. It catalyses the reaction Successive hydrolysis of beta-D-glucose units from the non-reducing ends of (1-&gt;3)-beta-D-glucans, releasing alpha-glucose.. In terms of biological role, beta-glucanases participate in the metabolism of beta-glucan, the main structural component of the cell wall. It could also function biosynthetically as a transglycosylase. This is Glucan 1,3-beta-glucosidase 2 (EXG2) from Wickerhamomyces anomalus (Yeast).